Consider the following 309-residue polypeptide: Type II methyltransferase M.HindIII (309 aa).

This sequence belongs to the N(4)/N(6)-methyltransferase family.

The catalysed reaction is a 2'-deoxyadenosine in DNA + S-adenosyl-L-methionine = an N(6)-methyl-2'-deoxyadenosine in DNA + S-adenosyl-L-homocysteine + H(+). Functionally, a beta subtype methylase that recognizes the double-stranded sequence 5'-AAGCTT-3', methylates A-1 on both strands, and protects the DNA from cleavage by the HindIII endonuclease. The chain is Type II methyltransferase M.HindIII from Haemophilus influenzae (strain ATCC 51907 / DSM 11121 / KW20 / Rd).